The primary structure comprises 154 residues: Myoglobin (154 aa).

The region spanning 2–148 is the Globin domain; that stretch reads GLSDGEWQLV…FRKDIAAKYK (147 aa). S4 carries the phosphoserine modification. Nitrite is bound at residue H65. H65 is an O2 binding site. T68 bears the Phosphothreonine mark. H94 serves as a coordination point for heme b.

This sequence belongs to the globin family. In terms of assembly, monomeric.

It localises to the cytoplasm. The protein resides in the sarcoplasm. The enzyme catalyses Fe(III)-heme b-[protein] + nitric oxide + H2O = Fe(II)-heme b-[protein] + nitrite + 2 H(+). It carries out the reaction H2O2 + AH2 = A + 2 H2O. Its function is as follows. Monomeric heme protein which primary function is to store oxygen and facilitate its diffusion within muscle tissues. Reversibly binds oxygen through a pentacoordinated heme iron and enables its timely and efficient release as needed during periods of heightened demand. Depending on the oxidative conditions of tissues and cells, and in addition to its ability to bind oxygen, it also has a nitrite reductase activity whereby it regulates the production of bioactive nitric oxide. Under stress conditions, like hypoxia and anoxia, it also protects cells against reactive oxygen species thanks to its pseudoperoxidase activity. This chain is Myoglobin (MB), found in Castor fiber (Eurasian beaver).